A 622-amino-acid polypeptide reads, in one-letter code: Mitochondrial distribution and morphology protein 34 (622 aa).

Residues Met-1–Leu-204 enclose the SMP-LTD domain. 2 disordered regions span residues Tyr-362–Leu-399 and Phe-568–Glu-592. A compositionally biased stretch (basic residues) spans Lys-370 to Ser-384. The segment covering Thr-390–Leu-399 has biased composition (polar residues). Over residues Gly-571–Asn-583 the composition is skewed to low complexity.

The protein belongs to the MDM34 family. In terms of assembly, component of the ER-mitochondria encounter structure (ERMES) or MDM complex, composed of MMM1, MDM10, MDM12 and MDM34.

Its subcellular location is the mitochondrion outer membrane. Functionally, component of the ERMES/MDM complex, which serves as a molecular tether to connect the endoplasmic reticulum (ER) and mitochondria. Components of this complex are involved in the control of mitochondrial shape and protein biogenesis, and function in nonvesicular lipid trafficking between the ER and mitochondria. MDM34 is required for the interaction of the ER-resident membrane protein MMM1 and the outer mitochondrial membrane-resident beta-barrel protein MDM10. The chain is Mitochondrial distribution and morphology protein 34 from Candida dubliniensis (strain CD36 / ATCC MYA-646 / CBS 7987 / NCPF 3949 / NRRL Y-17841) (Yeast).